The sequence spans 266 residues: Translation initiation factor 2 subunit alpha (266 aa).

The S1 motif domain occupies 12–83 (GEILIATVKQ…RKGTVDVSLK (72 aa)).

The protein belongs to the eIF-2-alpha family. As to quaternary structure, heterotrimer composed of an alpha, a beta and a gamma chain.

In terms of biological role, eIF-2 functions in the early steps of protein synthesis by forming a ternary complex with GTP and initiator tRNA. The chain is Translation initiation factor 2 subunit alpha from Saccharolobus islandicus (strain L.S.2.15 / Lassen #1) (Sulfolobus islandicus).